The chain runs to 375 residues: 4,4'-diaponeurosporenoate glycosyltransferase (375 aa).

Transmembrane regions (helical) follow at residues 3–23 (WLSR…ALIF), 164–184 (FYEG…NVFS), 277–297 (IMAA…GLCL), and 330–350 (FSNL…KIFI).

This sequence belongs to the glycosyltransferase 2 family. CrtQ subfamily.

The protein localises to the cell membrane. The protein operates within carotenoid biosynthesis; staphyloxanthin biosynthesis; staphyloxanthin from farnesyl diphosphate: step 4/5. Catalyzes the glycosylation of 4,4'-diaponeurosporenoate, i.e. the esterification of glucose at the C1'' position with the carboxyl group of 4,4'-diaponeurosporenic acid, to form glycosyl-4,4'-diaponeurosporenoate. This is a step in the biosynthesis of staphyloxanthin, an orange pigment present in most staphylococci strains. The chain is 4,4'-diaponeurosporenoate glycosyltransferase (crtQ) from Staphylococcus aureus (strain bovine RF122 / ET3-1).